The primary structure comprises 536 residues: Chaperonin GroEL (536 aa).

ATP-binding positions include 30–33, 86–90, Gly414, and Asp494; these read TLGP and DGTTT.

The protein belongs to the chaperonin (HSP60) family. In terms of assembly, forms a cylinder of 14 subunits composed of two heptameric rings stacked back-to-back. Interacts with the co-chaperonin GroES.

The protein resides in the cytoplasm. It carries out the reaction ATP + H2O + a folded polypeptide = ADP + phosphate + an unfolded polypeptide.. Its function is as follows. Together with its co-chaperonin GroES, plays an essential role in assisting protein folding. The GroEL-GroES system forms a nano-cage that allows encapsulation of the non-native substrate proteins and provides a physical environment optimized to promote and accelerate protein folding. The sequence is that of Chaperonin GroEL from Methanospirillum hungatei JF-1 (strain ATCC 27890 / DSM 864 / NBRC 100397 / JF-1).